We begin with the raw amino-acid sequence, 411 residues long: Adenylosuccinate synthetase (411 aa).

GTP is bound by residues 11-17 (GDEGKGK) and 39-41 (GHT). Residue Asp12 is the Proton acceptor of the active site. Residues Asp12 and Gly39 each coordinate Mg(2+). IMP contacts are provided by residues 12–15 (DEGK), 37–40 (NAGH), Thr121, Arg135, Gln215, Thr230, and Arg294. The active-site Proton donor is His40. Residue 290 to 296 (TTTKRPR) coordinates substrate. Residues Arg296, 322–324 (KLD), and 400–402 (STS) each bind GTP.

This sequence belongs to the adenylosuccinate synthetase family. In terms of assembly, homodimer. Mg(2+) serves as cofactor.

The protein localises to the cytoplasm. The enzyme catalyses IMP + L-aspartate + GTP = N(6)-(1,2-dicarboxyethyl)-AMP + GDP + phosphate + 2 H(+). Its pathway is purine metabolism; AMP biosynthesis via de novo pathway; AMP from IMP: step 1/2. Plays an important role in the de novo pathway of purine nucleotide biosynthesis. Catalyzes the first committed step in the biosynthesis of AMP from IMP. In Helicobacter pylori (strain P12), this protein is Adenylosuccinate synthetase.